The primary structure comprises 629 residues: Hemocyanin G chain (629 aa).

Residues H171, H175, H202, H322, H326, and H362 each contribute to the Cu cation site. N-linked (GlcNAc...) asparagine glycans are attached at residues N447 and N506. C534 and C582 form a disulfide bridge. N-linked (GlcNAc...) asparagine glycosylation is present at N615.

It belongs to the tyrosinase family. Hemocyanin subfamily. Tarantula hemocyanin is a 24-chain polymer with seven different chains identified. Hemolymph.

The protein resides in the secreted. Its subcellular location is the extracellular space. Functionally, hemocyanins are copper-containing oxygen carriers occurring freely dissolved in the hemolymph of many mollusks and arthropods. In Aphonopelma sp. (American tarantula), this protein is Hemocyanin G chain (HCG).